Reading from the N-terminus, the 376-residue chain is Chaperone protein DnaJ (376 aa).

One can recognise a J domain in the interval 5-70; that stretch reads DYYEVLGVGR…DKKAAYDQFG (66 aa). Residues 132-210 form a CR-type zinc finger; that stretch reads GLTKELRIPT…CHGEGRVEKS (79 aa). Cys145, Cys148, Cys162, Cys165, Cys184, Cys187, Cys198, and Cys201 together coordinate Zn(2+). 4 CXXCXGXG motif repeats span residues 145–152, 162–169, 184–191, and 198–205; these read CDLCDGSG, CGTCHGQG, CPTCHGRG, and CGKCHGEG.

This sequence belongs to the DnaJ family. In terms of assembly, homodimer. Zn(2+) is required as a cofactor.

The protein localises to the cytoplasm. Functionally, participates actively in the response to hyperosmotic and heat shock by preventing the aggregation of stress-denatured proteins and by disaggregating proteins, also in an autonomous, DnaK-independent fashion. Unfolded proteins bind initially to DnaJ; upon interaction with the DnaJ-bound protein, DnaK hydrolyzes its bound ATP, resulting in the formation of a stable complex. GrpE releases ADP from DnaK; ATP binding to DnaK triggers the release of the substrate protein, thus completing the reaction cycle. Several rounds of ATP-dependent interactions between DnaJ, DnaK and GrpE are required for fully efficient folding. Also involved, together with DnaK and GrpE, in the DNA replication of plasmids through activation of initiation proteins. This chain is Chaperone protein DnaJ, found in Shewanella frigidimarina (strain NCIMB 400).